The chain runs to 496 residues: Acetyl-coenzyme A carboxylase carboxyl transferase subunit beta, chloroplastic (496 aa).

A CoA carboxyltransferase N-terminal domain is found at 229-496; it reads LWVQCENCYG…FFPLNKNFIK (268 aa). Residues C233, C236, C252, and C255 each contribute to the Zn(2+) site. The C4-type zinc finger occupies 233–255; it reads CENCYGLNYKKFFRLKLHICEQC.

This sequence belongs to the AccD/PCCB family. As to quaternary structure, acetyl-CoA carboxylase is a heterohexamer composed of biotin carboxyl carrier protein, biotin carboxylase and 2 subunits each of ACCase subunit alpha and ACCase plastid-coded subunit beta (accD). Requires Zn(2+) as cofactor.

The protein localises to the plastid. It localises to the chloroplast stroma. The catalysed reaction is N(6)-carboxybiotinyl-L-lysyl-[protein] + acetyl-CoA = N(6)-biotinyl-L-lysyl-[protein] + malonyl-CoA. Its pathway is lipid metabolism; malonyl-CoA biosynthesis; malonyl-CoA from acetyl-CoA: step 1/1. Functionally, component of the acetyl coenzyme A carboxylase (ACC) complex. Biotin carboxylase (BC) catalyzes the carboxylation of biotin on its carrier protein (BCCP) and then the CO(2) group is transferred by the transcarboxylase to acetyl-CoA to form malonyl-CoA. In Ranunculus macranthus (Large buttercup), this protein is Acetyl-coenzyme A carboxylase carboxyl transferase subunit beta, chloroplastic.